The primary structure comprises 524 residues: uncharacterized protein (524 aa).

A helical transmembrane segment spans residues 13–33; sequence EFILLILGMTVVGIVITMGLV.

The protein resides in the membrane. This is an uncharacterized protein from Methanocaldococcus jannaschii (strain ATCC 43067 / DSM 2661 / JAL-1 / JCM 10045 / NBRC 100440) (Methanococcus jannaschii).